The sequence spans 410 residues: MSSGALFPSLVSGSRSSSSKYLVEFRAGKMTLKGSTVTPDKRKGTVYIQQTDDSLIHFCWKDRTSGNVEDDLIIFPDDCEFKRVNQCTTGRVYVLKFKAGSKRLFFWMQEPKTDKDDEYCRKVNEYLNNPPMPGALGSGGGGGHELSALGEGGLQSLLGNMSHNQLMQLIGPTGLGGLGALAGPGLASLLGSGGPATSSSTSSSRSQSAAATPSSGSAARLSSTQAPTTPVTPAATSSGSPTVTPTTPAAQTPSLPAGPASSTQPIQLSDLQSILATMNVPAMPTEGSGVDLASVLTPDVMAPILANPEVQQRLLPYLPSGESLPQSAEEIQNTLTSPQFQQAMSMFSSALASGQLGPLMNQFGLPSEAVDAANKGDVEAFAKAMEGSDSKTDDGDSKDKKDDDEDMSLD.

The Pru domain occupies 17-130 (SSSKYLVEFR…RKVNEYLNNP (114 aa)). A Phosphoserine modification is found at S18. A compositionally biased stretch (low complexity) spans 191–257 (GSGGPATSSS…PAAQTPSLPA (67 aa)). Disordered stretches follow at residues 191–264 (GSGG…SSTQ) and 381–410 (FAKA…MSLD). The region spanning 281 to 395 (PAMPTEGSGV…EGSDSKTDDG (115 aa)) is the DEUBAD domain. The span at 381–401 (FAKAMEGSDSKTDDGDSKDKK) shows a compositional bias: basic and acidic residues.

Belongs to the ADRM1 family. Component of the 19S proteasome regulatory particle complex. The 26S proteasome consists of a 20S core particle (CP) and two 19S regulatory subunits (RP).

It is found in the cytoplasm. Its subcellular location is the nucleus. In terms of biological role, component of the 26S proteasome, a multiprotein complex involved in the ATP-dependent degradation of ubiquitinated proteins. This complex plays a key role in the maintenance of protein homeostasis by removing misfolded or damaged proteins, which could impair cellular functions, and by removing proteins whose functions are no longer required. Therefore, the proteasome participates in numerous cellular processes, including cell cycle progression, apoptosis, or DNA damage repair. Within the complex, functions as a proteasomal ubiquitin receptor. This chain is Proteasomal ubiquitin receptor ADRM1 (adrm1b), found in Danio rerio (Zebrafish).